An 811-amino-acid polypeptide reads, in one-letter code: DNA gyrase subunit A (811 aa).

The region spanning 30 to 493 (LPDVRDGLKP…LEEDIGKEDL (464 aa)) is the Topo IIA-type catalytic domain. Y118 acts as the O-(5'-phospho-DNA)-tyrosine intermediate in catalysis. The short motif at 520 to 526 (QGRGGRG) is the GyrA-box element.

It belongs to the type II topoisomerase GyrA/ParC subunit family. In terms of assembly, heterotetramer, composed of two GyrA and two GyrB chains. In the heterotetramer, GyrA contains the active site tyrosine that forms a transient covalent intermediate with DNA, while GyrB binds cofactors and catalyzes ATP hydrolysis.

It localises to the cytoplasm. It carries out the reaction ATP-dependent breakage, passage and rejoining of double-stranded DNA.. In terms of biological role, a type II topoisomerase that negatively supercoils closed circular double-stranded (ds) DNA in an ATP-dependent manner to modulate DNA topology and maintain chromosomes in an underwound state. Negative supercoiling favors strand separation, and DNA replication, transcription, recombination and repair, all of which involve strand separation. Also able to catalyze the interconversion of other topological isomers of dsDNA rings, including catenanes and knotted rings. Type II topoisomerases break and join 2 DNA strands simultaneously in an ATP-dependent manner. The chain is DNA gyrase subunit A from Deinococcus deserti (strain DSM 17065 / CIP 109153 / LMG 22923 / VCD115).